The sequence spans 404 residues: ATP phosphoribosyltransferase regulatory subunit (404 aa).

This sequence belongs to the class-II aminoacyl-tRNA synthetase family. HisZ subfamily. Heteromultimer composed of HisG and HisZ subunits.

Its subcellular location is the cytoplasm. Its pathway is amino-acid biosynthesis; L-histidine biosynthesis; L-histidine from 5-phospho-alpha-D-ribose 1-diphosphate: step 1/9. Functionally, required for the first step of histidine biosynthesis. May allow the feedback regulation of ATP phosphoribosyltransferase activity by histidine. The chain is ATP phosphoribosyltransferase regulatory subunit from Trichormus variabilis (strain ATCC 29413 / PCC 7937) (Anabaena variabilis).